The primary structure comprises 342 residues: Ribosomal RNA small subunit methyltransferase C (342 aa).

Belongs to the methyltransferase superfamily. RsmC family. As to quaternary structure, monomer.

The protein localises to the cytoplasm. The enzyme catalyses guanosine(1207) in 16S rRNA + S-adenosyl-L-methionine = N(2)-methylguanosine(1207) in 16S rRNA + S-adenosyl-L-homocysteine + H(+). Functionally, specifically methylates the guanine in position 1207 of 16S rRNA in the 30S particle. The sequence is that of Ribosomal RNA small subunit methyltransferase C from Erwinia tasmaniensis (strain DSM 17950 / CFBP 7177 / CIP 109463 / NCPPB 4357 / Et1/99).